A 151-amino-acid chain; its full sequence is 1,4-dihydroxy-2-naphthoyl-CoA hydrolase (151 aa).

Residue D19 is part of the active site.

This sequence belongs to the 4-hydroxybenzoyl-CoA thioesterase family. DHNA-CoA hydrolase subfamily.

The enzyme catalyses 1,4-dihydroxy-2-naphthoyl-CoA + H2O = 1,4-dihydroxy-2-naphthoate + CoA + H(+). Its pathway is cofactor biosynthesis; phylloquinone biosynthesis. It participates in quinol/quinone metabolism; 1,4-dihydroxy-2-naphthoate biosynthesis; 1,4-dihydroxy-2-naphthoate from chorismate: step 7/7. Functionally, catalyzes the hydrolysis of 1,4-dihydroxy-2-naphthoyl-CoA (DHNA-CoA) to 1,4-dihydroxy-2-naphthoate (DHNA), a reaction involved in phylloquinone (vitamin K1) biosynthesis. This is 1,4-dihydroxy-2-naphthoyl-CoA hydrolase from Prochlorococcus marinus (strain MIT 9303).